The sequence spans 421 residues: Aspartokinase (421 aa).

7–10 (KYGG) is a binding site for ATP. 25–30 (RIVATK) is a substrate binding site. Position 41 (serine 41) interacts with ATP. Substrate is bound by residues 45–49 (DTTDE), glutamate 74, 125–126 (LD), 151–154 (RGGS), and serine 154. ATP contacts are provided by residues 174 to 175 (SD), 180 to 185 (YTADPR), and lysine 210. ACT domains are found at residues 267–343 (VTVL…YDDQ) and 349–421 (LVGA…GTGR). Substrate is bound by residues aspartate 274, 274–279 (DKPGEA), 292–294 (NID), glutamine 298, 360–361 (VT), 374–375 (NI), and 381–382 (SE).

It belongs to the aspartokinase family. In terms of assembly, tetramer consisting of 2 isoforms Alpha (catalytic and regulation) and of a homodimer of 2 isoforms Beta (regulation). The dimerization of the beta isoforms is stabilized by the bonding of threonine.

The enzyme catalyses L-aspartate + ATP = 4-phospho-L-aspartate + ADP. It functions in the pathway amino-acid biosynthesis; L-lysine biosynthesis via DAP pathway; (S)-tetrahydrodipicolinate from L-aspartate: step 1/4. Its pathway is amino-acid biosynthesis; L-methionine biosynthesis via de novo pathway; L-homoserine from L-aspartate: step 1/3. The protein operates within amino-acid biosynthesis; L-threonine biosynthesis; L-threonine from L-aspartate: step 1/5. Its activity is regulated as follows. Feedback inhibition by lysine and threonine, but he enzyme is moderately inhibited by lysine alone, and threonine alone has no effect. Catalyzes the phosphorylation of the beta-carboxyl group of aspartic acid with ATP to yield 4-phospho-L-aspartate, which is involved in the branched biosynthetic pathway leading to the biosynthesis of amino acids lysine, threonine, isoleucine and methionine. The chain is Aspartokinase (lysC) from Corynebacterium glutamicum (strain ATCC 13032 / DSM 20300 / JCM 1318 / BCRC 11384 / CCUG 27702 / LMG 3730 / NBRC 12168 / NCIMB 10025 / NRRL B-2784 / 534).